Reading from the N-terminus, the 659-residue chain is Acetyl-coenzyme A synthetase (659 aa).

CoA-binding positions include 206-209 (RRGK) and T324. ATP contacts are provided by residues 400–402 (GEP), 424–429 (DTWWQT), D516, R531, and R542. Mg(2+) is bound by residues V553 and H555. R600 provides a ligand contact to CoA.

It belongs to the ATP-dependent AMP-binding enzyme family. It depends on Mg(2+) as a cofactor.

It carries out the reaction acetate + ATP + CoA = acetyl-CoA + AMP + diphosphate. Functionally, catalyzes the conversion of acetate into acetyl-CoA (AcCoA), an essential intermediate at the junction of anabolic and catabolic pathways. AcsA undergoes a two-step reaction. In the first half reaction, AcsA combines acetate with ATP to form acetyl-adenylate (AcAMP) intermediate. In the second half reaction, it can then transfer the acetyl group from AcAMP to the sulfhydryl group of CoA, forming the product AcCoA. This Methanothrix thermoacetophila (strain DSM 6194 / JCM 14653 / NBRC 101360 / PT) (Methanosaeta thermophila) protein is Acetyl-coenzyme A synthetase (acsA).